The following is an 878-amino-acid chain: Pyruvate, phosphate dikinase (878 aa).

An N-terminal region spans residues Met-1–Lys-347. Arg-96 provides a ligand contact to ATP. The segment at Arg-348–Ser-404 is linker 1. Residues Pro-405–Ile-502 form a central region. Thr-457 is subject to Phosphothreonine; by PDRP1. Catalysis depends on His-459, which acts as the Tele-phosphohistidine intermediate. The tract at residues Asp-503–Ser-537 is linker 2. Residues Leu-538 to Gly-878 form a C-terminal region. The substrate site is built by Arg-565, Arg-621, Glu-749, Gly-770, Thr-771, Asn-772, and Asp-773. Glu-749 is a Mg(2+) binding site. Residue Asp-773 participates in Mg(2+) binding. The Proton donor role is filled by Cys-835.

It belongs to the PEP-utilizing enzyme family. As to quaternary structure, homodimer. It depends on Mg(2+) as a cofactor. Phosphorylation of Thr-457 in the dark inactivates the enzyme. Dephosphorylation upon light stimulation reactivates the enzyme.

The catalysed reaction is pyruvate + phosphate + ATP = phosphoenolpyruvate + AMP + diphosphate + H(+). Its activity is regulated as follows. Activated by light-induced dephosphorylation. Inhibited by dark-induced phosphorylation. Both reactions are catalyzed by PDRP1. In terms of biological role, catalyzes the reversible phosphorylation of pyruvate and phosphate. The sequence is that of Pyruvate, phosphate dikinase (ppdK) from Rickettsia felis (strain ATCC VR-1525 / URRWXCal2) (Rickettsia azadi).